Reading from the N-terminus, the 105-residue chain is Small cysteine and glycine repeat-containing protein 6 (105 aa).

The segment at 4–83 is 13 X 2 AA repeats of CG; sequence CGCGGCGGGC…HSCGCGCGCG (80 aa).

It belongs to the KRTAP type 28 family.

Functionally, in the hair cortex, hair keratin intermediate filaments are embedded in an interfilamentous matrix, consisting of hair keratin-associated proteins (KRTAP), which are essential for the formation of a rigid and resistant hair shaft through their extensive disulfide bond cross-linking with abundant cysteine residues of hair keratins. The matrix proteins include the high-sulfur and high-glycine-tyrosine keratins. This chain is Small cysteine and glycine repeat-containing protein 6, found in Homo sapiens (Human).